The sequence spans 216 residues: Homeobox-leucine zipper protein ATHB-40 (216 aa).

Positions 28–52 are disordered; the sequence is GEVKQPKRRRKKTKGSVASADGGNG. The segment at residues 52-111 is a DNA-binding region (homeobox); sequence GLFRKRKLTDEQVNMLEMSFGDEHKLESERKDRLAAELGLDPRQVAVWFQNRRARWKNKR. The leucine-zipper stretch occupies residues 112–140; the sequence is LEEEYNKLKNSHDNVVVDKCRLESEVIQL.

The protein belongs to the HD-ZIP homeobox family. Class I subfamily. Expressed in roots, flowers and siliques.

Its subcellular location is the nucleus. Probable transcription factor. The polypeptide is Homeobox-leucine zipper protein ATHB-40 (ATHB-40) (Arabidopsis thaliana (Mouse-ear cress)).